A 101-amino-acid polypeptide reads, in one-letter code: Large ribosomal subunit protein bL28 (101 aa).

The protein belongs to the bacterial ribosomal protein bL28 family.

In Rhodopseudomonas palustris (strain BisB5), this protein is Large ribosomal subunit protein bL28.